Here is a 199-residue protein sequence, read N- to C-terminus: DNA repair RAD52-like protein 2, chloroplastic (199 aa).

The transit peptide at 1–40 directs the protein to the chloroplast; the sequence is MALQVQQTSAAFTISSPSTAAARIKLSPFRTVAVNRGVRC. Residue serine 41 is modified to N-acetylserine.

This sequence belongs to the RAD52 family. As to expression, expressed in roots and shoots. Expressed at low levels in cauline leaves, flower buds, flowers and siliques.

It is found in the plastid. The protein localises to the chloroplast. Involved in double-stranded DNA break repair. This Arabidopsis thaliana (Mouse-ear cress) protein is DNA repair RAD52-like protein 2, chloroplastic.